We begin with the raw amino-acid sequence, 732 residues long: MIGRKEKERERPYYRDPDDPEYIKDLQRPAVIKEDLSEMERRKRVQQILESKSFCHELEEVIRQECDTARTDPDHLQVLQKLSDLTVPQGNMSFGNLHTYGGNTIAIADLRGNEKYSKAERIQRNKLACLFRLADLFQWSQGIHNEISYRTNDEDNTFLMNPFGLLYHEITAATIVKIDENGKILDCGTLKAGVNQPAFLLHSAIYKAHPMVRCILHMHTAIVAAVASMKCGLLPLCKEAMVLGPVGYHDYQDIGDDDIQFDEIIANLGDKNVLFLRNQGFLVVGDTIEHATFLANNTVIACETQVRAARAGLDNLIIPEEKAIQRAFRNSRNTNSLKRNGTVDWRVGELEWESWMRVLDHANFQTGHVYRQPQLRPKSAMSTSMVNNNDVAVPPTTSAYGQIDETNLESVSAHRLALLRKEQERVRWMNSPNAYQKVEFLEYGADNPKKITKWVHDVNVPSASGTPVKISSVHQFSPASSNPKEFKEKQKAIKENNRLGTLSAGPQSQILDSVTYEDIALLIKPDNDGTVGQSSTADRAILIGTASKGIIDRQFQHHAQVYHQIYAPNPFSVETDADIKKYVDMVKAKNSQSAPVSARSGYSQYDEVEADTVSLMQGVREHKLSQAALSASDDGLNAGISPNNVRTSEESVNTSYMSQSVVFDCDHPSPMSISTEYPEKVKMTRFSSTQGTSEGNTTSRSCTTASEEEKPTKDEKKKKKKGFLSFMRKKDK.

Disordered regions lie at residues 1–22 and 684–732; these read MIGR…DPEY and TRFS…KKDK. Residues 685–705 are compositionally biased toward polar residues; sequence RFSSTQGTSEGNTTSRSCTTA. Basic residues predominate over residues 716-732; sequence KKKKKKGFLSFMRKKDK.

Belongs to the aldolase class II family. Adducin subfamily.

It localises to the cytoplasm. The protein localises to the cytoskeleton. It is found in the cell membrane. Functionally, membrane-cytoskeleton-associated protein that promotes the assembly of the spectrin-actin network. Plays a role in time-dependent memmory loss and the retention of conditioned behavior over time. This chain is Adducin-related protein 1, found in Caenorhabditis elegans.